Here is a 172-residue protein sequence, read N- to C-terminus: Adenine phosphoribosyltransferase (172 aa).

It belongs to the purine/pyrimidine phosphoribosyltransferase family. In terms of assembly, homodimer.

The protein localises to the cytoplasm. The catalysed reaction is AMP + diphosphate = 5-phospho-alpha-D-ribose 1-diphosphate + adenine. It functions in the pathway purine metabolism; AMP biosynthesis via salvage pathway; AMP from adenine: step 1/1. In terms of biological role, catalyzes a salvage reaction resulting in the formation of AMP, that is energically less costly than de novo synthesis. The polypeptide is Adenine phosphoribosyltransferase (Clostridium botulinum (strain Loch Maree / Type A3)).